A 372-amino-acid polypeptide reads, in one-letter code: NAD(P)H-quinone oxidoreductase subunit 1 (372 aa).

A run of 8 helical transmembrane segments spans residues 28–48 (IWLP…VLVV), 97–117 (WLFT…YLIV), 130–150 (VGIF…LMSG), 176–196 (LALA…IDIV), 204–224 (ILGW…IAAL), 265–285 (LVLS…FPIP), 308–328 (SLGI…AVLL), and 351–371 (VALV…IAFG).

Belongs to the complex I subunit 1 family. As to quaternary structure, NDH-1 is composed of at least 11 different subunits.

It is found in the cellular thylakoid membrane. The catalysed reaction is a plastoquinone + NADH + (n+1) H(+)(in) = a plastoquinol + NAD(+) + n H(+)(out). It carries out the reaction a plastoquinone + NADPH + (n+1) H(+)(in) = a plastoquinol + NADP(+) + n H(+)(out). Functionally, NDH-1 shuttles electrons from an unknown electron donor, via FMN and iron-sulfur (Fe-S) centers, to quinones in the respiratory and/or the photosynthetic chain. The immediate electron acceptor for the enzyme in this species is believed to be plastoquinone. Couples the redox reaction to proton translocation, and thus conserves the redox energy in a proton gradient. This Picosynechococcus sp. (strain ATCC 27264 / PCC 7002 / PR-6) (Agmenellum quadruplicatum) protein is NAD(P)H-quinone oxidoreductase subunit 1.